A 397-amino-acid polypeptide reads, in one-letter code: MIRYLTSGESHGPALTAIVDGLPAGIDITQNDIDSQLLRRQQGYGRGGRMTIESDKAEVMSGIRFGKSIGSPITLLIRNRDWENWTTTMARFEEPVEEIAKISIPRPGHADLAGRIKYGFNDIRPVIERSSARETAARVAAGSLSRVFLKALGIEIGSYVSAIGSAAEPTVNPAVEELLVNGAECLALEADRSSVRMLNKSAEAGAIAAIDEVKKQGDTLGGIIEIFITGVPMGLGSYVQHDRRLDAMLVSALMSIQAIKGAEIGHAFENSRKPGSQVHDEFFLSENTGLERKTNRAGGLEGSMSSGQTIHLRAAMKPISSLVTPLHSFDLETMKPTLSRFERSDTCAVPAAGVVAEAVVAPVIANALLEKLGGDHFIEIKSRLETYRDHLHRTFKA.

Positions 40 and 46 each coordinate NADP(+). FMN is bound by residues 129–131 (RSS), 257–258 (QA), Gly-302, 317–321 (KPISS), and Arg-343.

The protein belongs to the chorismate synthase family. Homotetramer. FMNH2 serves as cofactor.

The catalysed reaction is 5-O-(1-carboxyvinyl)-3-phosphoshikimate = chorismate + phosphate. The protein operates within metabolic intermediate biosynthesis; chorismate biosynthesis; chorismate from D-erythrose 4-phosphate and phosphoenolpyruvate: step 7/7. Its function is as follows. Catalyzes the anti-1,4-elimination of the C-3 phosphate and the C-6 proR hydrogen from 5-enolpyruvylshikimate-3-phosphate (EPSP) to yield chorismate, which is the branch point compound that serves as the starting substrate for the three terminal pathways of aromatic amino acid biosynthesis. This reaction introduces a second double bond into the aromatic ring system. The protein is Chorismate synthase of Chlorobium limicola (strain DSM 245 / NBRC 103803 / 6330).